A 141-amino-acid polypeptide reads, in one-letter code: 3-hydroxyacyl-[acyl-carrier-protein] dehydratase FabZ (141 aa).

Histidine 49 is an active-site residue.

This sequence belongs to the thioester dehydratase family. FabZ subfamily.

It is found in the cytoplasm. It catalyses the reaction a (3R)-hydroxyacyl-[ACP] = a (2E)-enoyl-[ACP] + H2O. Functionally, involved in unsaturated fatty acids biosynthesis. Catalyzes the dehydration of short chain beta-hydroxyacyl-ACPs and long chain saturated and unsaturated beta-hydroxyacyl-ACPs. This is 3-hydroxyacyl-[acyl-carrier-protein] dehydratase FabZ (fabZ2) from Enterococcus faecalis (strain ATCC 700802 / V583).